Here is a 364-residue protein sequence, read N- to C-terminus: Putative serine/threonine-protein phosphatase C06A1.3 (364 aa).

The segment at 1–24 (MSTDGNNNKKGSKEGPKSSEISKF) is disordered. A compositionally biased stretch (basic and acidic residues) spans 11–24 (GSKEGPKSSEISKF). Mn(2+) contacts are provided by D93, H95, D121, and N153. H154 (proton donor) is an active-site residue. Mn(2+) is bound by residues H202 and H277.

The protein belongs to the PPP phosphatase family. PP-1 subfamily. Requires Mn(2+) as cofactor.

The catalysed reaction is O-phospho-L-seryl-[protein] + H2O = L-seryl-[protein] + phosphate. It carries out the reaction O-phospho-L-threonyl-[protein] + H2O = L-threonyl-[protein] + phosphate. The sequence is that of Putative serine/threonine-protein phosphatase C06A1.3 from Caenorhabditis elegans.